An 837-amino-acid polypeptide reads, in one-letter code: Outer membrane usher protein HifC (837 aa).

A signal peptide spans 1–26 (MKTKIFPLNKIAFACSLLLANPLAWA). Cysteine 813 and cysteine 833 are oxidised to a cystine.

This sequence belongs to the fimbrial export usher family.

The protein resides in the cell outer membrane. Functionally, essential for piliation. This Haemophilus influenzae protein is Outer membrane usher protein HifC (hifC).